The chain runs to 4423 residues: Nonribosomal peptide synthetase 7 (4423 aa).

Residues 572–986 (NIYPCTSIQE…LISQDDKNRI (415 aa)) form a condensation 1 region. Positions 1007–1404 (ERIQKQPSAV…GRRDTQVKIR (398 aa)) are adenylation 1. In terms of domain architecture, Carrier 1 spans 1533 to 1609 (LPLTETEQKL…DLARTIDERN (77 aa)). Ser-1570 is subject to O-(pantetheine 4'-phosphoryl)serine. The interval 1657–2066 (EDVYPCTSLQ…QFLDETHHET (410 aa)) is condensation 2. The interval 2102-2499 (RDVAKEQPDS…YIGRMGSEVK (398 aa)) is adenylation 2. The Carrier 2 domain occupies 2642–2718 (VPQTRIGKKL…DCARILEADQ (77 aa)). Ser-2679 carries the O-(pantetheine 4'-phosphoryl)serine modification. The segment at 2764-3170 (EDVYPCTPMQ…AASASSDDQT (407 aa)) is condensation 3. The tract at residues 3205 to 3609 (RSLETRPDSQ…GRGDSQIKIR (405 aa)) is adenylation 3. The region spanning 3731–3804 (TESEYITRTL…KMAVVAQHQT (74 aa)) is the Carrier 3 domain. An O-(pantetheine 4'-phosphoryl)serine modification is found at Ser-3765. Residues 3875–4278 (TFVLDAEGDL…SQDEKLALLG (404 aa)) are condensation 4. Over residues 4288-4300 (KLTKLQRVNSPKE) the composition is skewed to polar residues. A disordered region spans residues 4288–4312 (KLTKLQRVNSPKEQTLRKDKPTNGV).

Belongs to the NRP synthetase family.

It functions in the pathway secondary metabolite biosynthesis. Its function is as follows. Nonribosomal peptide synthetase; part of the gene cluster that mediates the biosynthesis of the lipopeptide fusaristatin A. Fusaristatin A consists of a polyketide chain linked to three amino acid residues glutamine (Gln), dehydroalanine (dehydro-Ala), and beta-aminoisobutyric acid. The biosynthesis starts with formation of a linear polyketide chain by the highly reducing polyketide synthase PKS6. The gene cluster does not contain an acyl-CoA ligase or an acyl-transferase, and it is therefore predicted that the polyketide is transferred directly to the nonribosomal peptide synthetase NRPS7. Modules 1-3 from NRPS7 incorporate dehydro-Ala, Gln, and beta-aminoisobutyric acid in the compound, which is released by cyclization. The beta-aminoisobutyric acid units are most likely not freely available to the NRPS, but can be synthesized from thymine, which requires a dehydrogenase, a monooxygenase, and an aminotransferase. The fusaristatin A cluster contains a cytochrome P450 monooxygenase (FGSG_08207) and an aminotransferase (FGSG_17085), which theoretically can perform two of the enzymatic steps. The enzymes may however also be involved in biosynthesis of dehydroalanine or modification of the polyketide. The dehydro-Ala residue can be a result of cyclization, where serine is dehydrated. The last gene of the cluster encodes a protein with an A/B barrel domain found in variable enzymes, which hampers functional prediction. This chain is Nonribosomal peptide synthetase 7, found in Gibberella zeae (strain ATCC MYA-4620 / CBS 123657 / FGSC 9075 / NRRL 31084 / PH-1) (Wheat head blight fungus).